Here is a 399-residue protein sequence, read N- to C-terminus: L-2-hydroxyglutarate dehydrogenase (399 aa).

The protein belongs to the L2HGDH family. FAD is required as a cofactor.

It catalyses the reaction (S)-2-hydroxyglutarate + A = 2-oxoglutarate + AH2. Catalyzes the dehydrogenation of L-2-hydroxyglutarate (L2HG or(S)-2-hydroxyglutarate) to 2-oxoglutarate (alpha-ketoglutarate). Active in vitro with the artificial electron acceptor 2,6-dichlorophenolindophenol (DCPIP). Also displays a very low oxidase activity in vitro on L-2-hydroxyglutarate with O2 as the electron acceptor, but this activity is most likely not physiological. This chain is L-2-hydroxyglutarate dehydrogenase, found in Indibacter alkaliphilus (strain CCUG 57479 / KCTC 22604 / LW1).